Consider the following 227-residue polypeptide: DNA repair protein RecO (227 aa).

It belongs to the RecO family.

Its function is as follows. Involved in DNA repair and RecF pathway recombination. This chain is DNA repair protein RecO, found in Pseudomonas putida (strain ATCC 700007 / DSM 6899 / JCM 31910 / BCRC 17059 / LMG 24140 / F1).